The chain runs to 284 residues: 2-dehydro-3-deoxyphosphooctonate aldolase (284 aa).

The protein belongs to the KdsA family.

The protein localises to the cytoplasm. It catalyses the reaction D-arabinose 5-phosphate + phosphoenolpyruvate + H2O = 3-deoxy-alpha-D-manno-2-octulosonate-8-phosphate + phosphate. Its pathway is carbohydrate biosynthesis; 3-deoxy-D-manno-octulosonate biosynthesis; 3-deoxy-D-manno-octulosonate from D-ribulose 5-phosphate: step 2/3. The protein operates within bacterial outer membrane biogenesis; lipopolysaccharide biosynthesis. This is 2-dehydro-3-deoxyphosphooctonate aldolase from Actinobacillus succinogenes (strain ATCC 55618 / DSM 22257 / CCUG 43843 / 130Z).